Consider the following 64-residue polypeptide: Large ribosomal subunit protein uL29 (64 aa).

This sequence belongs to the universal ribosomal protein uL29 family.

The protein is Large ribosomal subunit protein uL29 of Coprothermobacter proteolyticus (strain ATCC 35245 / DSM 5265 / OCM 4 / BT).